Consider the following 108-residue polypeptide: Insulin (108 aa).

An N-terminal signal peptide occupies residues M1 to A21. 3 disulfides stabilise this stretch: C30/C94, C42/C107, and C93/C98. Residues D54 to R85 constitute a propeptide, c peptide.

The protein belongs to the insulin family. Heterodimer of a B chain and an A chain linked by two disulfide bonds.

Its subcellular location is the secreted. Its function is as follows. Insulin decreases blood glucose concentration. It increases cell permeability to monosaccharides, amino acids and fatty acids. It accelerates glycolysis, the pentose phosphate cycle, and glycogen synthesis in liver. This Cyprinus carpio (Common carp) protein is Insulin (ins).